Consider the following 100-residue polypeptide: Urease subunit gamma (100 aa).

It belongs to the urease gamma subunit family. Heterotrimer of UreA (gamma), UreB (beta) and UreC (alpha) subunits. Three heterotrimers associate to form the active enzyme.

The protein localises to the cytoplasm. The enzyme catalyses urea + 2 H2O + H(+) = hydrogencarbonate + 2 NH4(+). The protein operates within nitrogen metabolism; urea degradation; CO(2) and NH(3) from urea (urease route): step 1/1. In Rhizobium etli (strain ATCC 51251 / DSM 11541 / JCM 21823 / NBRC 15573 / CFN 42), this protein is Urease subunit gamma.